The primary structure comprises 347 residues: (RS)-norcoclaurine 6-O-methyltransferase (347 aa).

Residues Gly192, Asp215, Asp235, Met236, and Lys249 each coordinate S-adenosyl-L-methionine. Residue His253 is the Proton acceptor of the active site.

Belongs to the class I-like SAM-binding methyltransferase superfamily. Cation-independent O-methyltransferase family. COMT subfamily. In terms of assembly, homodimer.

It carries out the reaction norcoclaurine + S-adenosyl-L-methionine = coclaurine + S-adenosyl-L-homocysteine + H(+). Its pathway is alkaloid biosynthesis; (S)-reticuline biosynthesis; (S)-reticuline from (S)-norcoclaurine: step 1/4. Its function is as follows. Catalyzes the transfer of the S-methyl group of S-adenosyl-L-methionine (AdoMet) to the 6-hydroxyl group of norcoclaurine to form coclaurine. This chain is (RS)-norcoclaurine 6-O-methyltransferase, found in Coptis japonica (Japanese goldthread).